A 255-amino-acid polypeptide reads, in one-letter code: Ribonuclease HII (255 aa).

The 184-residue stretch at 72 to 255 (RLIAGVDEVG…KTFAPVQSFR (184 aa)) folds into the RNase H type-2 domain. Asp-78, Glu-79, and Asp-170 together coordinate a divalent metal cation.

The protein belongs to the RNase HII family. Mn(2+) serves as cofactor. Mg(2+) is required as a cofactor.

It is found in the cytoplasm. It carries out the reaction Endonucleolytic cleavage to 5'-phosphomonoester.. Its function is as follows. Endonuclease that specifically degrades the RNA of RNA-DNA hybrids. The sequence is that of Ribonuclease HII (rnhB) from Bacillus subtilis (strain 168).